We begin with the raw amino-acid sequence, 530 residues long: Glucose-6-phosphate isomerase (530 aa).

The active-site Proton donor is Glu-322. Residues His-351 and Lys-455 contribute to the active site.

This sequence belongs to the GPI family.

The protein resides in the cytoplasm. The catalysed reaction is alpha-D-glucose 6-phosphate = beta-D-fructose 6-phosphate. Its pathway is carbohydrate biosynthesis; gluconeogenesis. It participates in carbohydrate degradation; glycolysis; D-glyceraldehyde 3-phosphate and glycerone phosphate from D-glucose: step 2/4. Functionally, catalyzes the reversible isomerization of glucose-6-phosphate to fructose-6-phosphate. In Geotalea daltonii (strain DSM 22248 / JCM 15807 / FRC-32) (Geobacter daltonii), this protein is Glucose-6-phosphate isomerase.